The primary structure comprises 500 residues: MTTSKCPVTHLTMNNGAPVADNQNSLTAGTRGPLLTQDLWLNEKLADFVREVIPERRMHAKGSGAFGTFTVTRDITKYTRAKIFSEVGKKTEMFGRLATVAGERGADAYTRVRGFALKFYTEEGNWDVVGNNTPVFYPDLRKFPDLNKAVKRSAHQYSSATNNWDFWALLPEALHQVTIVMSDRGIPASYRHMHGFGSHTYSLWNEAGERFWVKFHFRSQQGIKNLTNEEAAKIIADDRESHQRDLYEAIERGEFPKWTMYIQVMPEADAAKVPYHPFDLTKVWPKKDYPLIEVAEFELNRNPENFFADVEQSAFAPSNLVPGIGASPDKMLQARLFNYADAQRYRLGVNFRQIPVNRPRCPVHSNQRDGQGRATELRQPAHYEPNSFGQWSQQPDFAEPPLKINGDAAHWDYRQDDDDYFSQPRALFNLMNDAQKQALFDNTAAAMGDAPDFIKYRHIRNCYRCDPAYGEGGSKALGLTVEEPQAARATDPALGQGGLL.

Active-site residues include His-59 and Asn-131. Tyr-339 lines the heme pocket.

Belongs to the catalase family. It depends on heme as a cofactor.

The enzyme catalyses 2 H2O2 = O2 + 2 H2O. Decomposes hydrogen peroxide into water and oxygen; serves to protect cells from the toxic effects of hydrogen peroxide. This is Catalase (katA) from Neisseria gonorrhoeae.